A 239-amino-acid polypeptide reads, in one-letter code: NAD-dependent protein deacylase (239 aa).

The Deacetylase sirtuin-type domain occupies 1–234 (MENLNIVTLT…KKVYDYLREK (234 aa)). NAD(+)-binding positions include 11-30 (GAGI…DGLW) and 89-92 (QNVD). The active-site Proton acceptor is the His107. 4 residues coordinate Zn(2+): Cys115, Cys118, Cys136, and Cys139. Residues 176–178 (GTS), 202–204 (NPE), and Ala220 contribute to the NAD(+) site.

It belongs to the sirtuin family. Class III subfamily. It depends on Zn(2+) as a cofactor.

It localises to the cytoplasm. It carries out the reaction N(6)-acetyl-L-lysyl-[protein] + NAD(+) + H2O = 2''-O-acetyl-ADP-D-ribose + nicotinamide + L-lysyl-[protein]. NAD-dependent protein deacetylase which modulates the activities of several proteins which are inactive in their acetylated form. This Aquifex aeolicus (strain VF5) protein is NAD-dependent protein deacylase.